The primary structure comprises 300 residues: Spermatogenesis-associated serine-rich protein 1 (300 aa).

Residues 1-10 show a composition bias toward polar residues; sequence MSPSMLTGNS. Disordered regions lie at residues 1-42 and 64-91; these read MSPS…MTEV and TPSG…LPRV. Residues 27 to 42 are compositionally biased toward basic and acidic residues; the sequence is QLEKVPEKRDSGMTEV. Residues 64-85 show a composition bias toward low complexity; it reads TPSGKSVSSSSSVETGPSVSEP. Ser113 carries the phosphoserine modification.

In Homo sapiens (Human), this protein is Spermatogenesis-associated serine-rich protein 1 (SPATS1).